The following is a 485-amino-acid chain: MSFWNSLSITTRYSRLPRCFFTYVQPTPLDNSRWLIWNSELAKQFDLPENVHNHSELLDAFSGETVPSVFSPLAMKYAGHQFGCYNPDLGDGRGLLLAEIKDKKGNSFDLHLKGAGLTPYSRSGDGRAVLRSTIREYLCSEAMAGLGIPTTRALGMMTSDTPVFREGYETGALLIRMAETHIRFGHFEHLFYSNLLEELKLLSDKVIEWHFPCCLGEDKPYLAMFNNIVDRTAYMIAQWQAVGFAHGVMNTDNMSIIGQTFDYGPFGFLDDYEPGYICNHSDYQGRYAFNQQPRIGLWNLSALAHSLSPLIDKSDLEKALEQYEIKLHDYFSQLMRKKLGLLSKQEGDTRLFESMFELLSQNAVDYTRFMRALSYLDSQDKQTVVDLFVDREAATLWIDLYLTRCKLEVDSFDMRCSKMRKVNPKYVLRNYLAQQAIVKANEGDFSDVKILSTLLASPFDEHPDFERYAELPPEWGKRMEISCSS.

The ATP site is built by Gly-90, Gly-92, Arg-93, Lys-113, Asp-125, Gly-126, Arg-176, and Arg-183. Asp-252 serves as the catalytic Proton acceptor. Positions 253 and 262 each coordinate Mg(2+). An ATP-binding site is contributed by Asp-262.

The protein belongs to the SELO family. Mg(2+) is required as a cofactor. Mn(2+) serves as cofactor.

The catalysed reaction is L-seryl-[protein] + ATP = 3-O-(5'-adenylyl)-L-seryl-[protein] + diphosphate. The enzyme catalyses L-threonyl-[protein] + ATP = 3-O-(5'-adenylyl)-L-threonyl-[protein] + diphosphate. It catalyses the reaction L-tyrosyl-[protein] + ATP = O-(5'-adenylyl)-L-tyrosyl-[protein] + diphosphate. It carries out the reaction L-histidyl-[protein] + UTP = N(tele)-(5'-uridylyl)-L-histidyl-[protein] + diphosphate. The catalysed reaction is L-seryl-[protein] + UTP = O-(5'-uridylyl)-L-seryl-[protein] + diphosphate. The enzyme catalyses L-tyrosyl-[protein] + UTP = O-(5'-uridylyl)-L-tyrosyl-[protein] + diphosphate. In terms of biological role, nucleotidyltransferase involved in the post-translational modification of proteins. It can catalyze the addition of adenosine monophosphate (AMP) or uridine monophosphate (UMP) to a protein, resulting in modifications known as AMPylation and UMPylation. This Aliivibrio fischeri (strain ATCC 700601 / ES114) (Vibrio fischeri) protein is Protein nucleotidyltransferase YdiU.